The primary structure comprises 304 residues: Non-specific ribonucleoside hydrolase RihC (304 aa).

The active site involves His235.

Belongs to the IUNH family. RihC subfamily.

Functionally, hydrolyzes both purine and pyrimidine ribonucleosides with a broad-substrate specificity. This Salmonella paratyphi A (strain ATCC 9150 / SARB42) protein is Non-specific ribonucleoside hydrolase RihC.